Consider the following 108-residue polypeptide: UPF0235 protein APE_0182.1 (108 aa).

The protein belongs to the UPF0235 family.

The chain is UPF0235 protein APE_0182.1 from Aeropyrum pernix (strain ATCC 700893 / DSM 11879 / JCM 9820 / NBRC 100138 / K1).